A 415-amino-acid polypeptide reads, in one-letter code: Histidine--tRNA ligase (415 aa).

This sequence belongs to the class-II aminoacyl-tRNA synthetase family. In terms of assembly, homodimer.

It localises to the cytoplasm. The catalysed reaction is tRNA(His) + L-histidine + ATP = L-histidyl-tRNA(His) + AMP + diphosphate + H(+). This Clostridium botulinum (strain Langeland / NCTC 10281 / Type F) protein is Histidine--tRNA ligase.